The chain runs to 532 residues: UDP-glucuronosyltransferase 1A4 (532 aa).

A signal peptide spans 1-27 (MVLGVWITLWRLVRLLLLLCVLPWAEG). 2 N-linked (GlcNAc...) asparagine glycosylation sites follow: asparagine 141 and asparagine 295. The chain crosses the membrane as a helical span at residues 490-506 (VIGFLLAIVLTVAFVTF).

Belongs to the UDP-glycosyltransferase family. In terms of assembly, homodimers. Homooligomer. Interacts with UGT1A1, UGT1A3, UGT1A6, UGT1A7, UGT1A8, UGT1A9 and UGT1A10 to form heterodimers.

It localises to the endoplasmic reticulum membrane. It catalyses the reaction glucuronate acceptor + UDP-alpha-D-glucuronate = acceptor beta-D-glucuronoside + UDP + H(+). The catalysed reaction is calcidiol + UDP-alpha-D-glucuronate = calcidiol 25-O-(beta-D-glucuronide) + UDP + H(+). The enzyme catalyses calcidiol + UDP-alpha-D-glucuronate = calcidiol 3-O-(beta-D-glucuronide) + UDP + H(+). It carries out the reaction calcitriol + UDP-alpha-D-glucuronate = calcitriol 25-O-(beta-D-glucuronide) + UDP + H(+). It catalyses the reaction (5Z,8Z,11Z,14Z)-eicosatetraenoate + UDP-alpha-D-glucuronate = O-[(5Z),(8Z),(11Z),(14Z)-eicosatetraenoyl]-beta-D-glucuronate + UDP. The catalysed reaction is 15-hydroxy-(5Z,8Z,11Z,13E)-eicosatetraenoate + UDP-alpha-D-glucuronate = 15-O-(beta-D-glucuronosyl)-(5Z,8Z,11Z,14Z)-eicosatetraenoate + UDP + H(+). The enzyme catalyses 20-hydroxy-(5Z,8Z,11Z,14Z)-eicosatetraenoate + UDP-alpha-D-glucuronate = 20-O-(beta-D-glucuronosyl)-(5Z,8Z,11Z,14Z)-eicosatetraenoate + UDP + H(+). UDP-glucuronosyltransferase (UGT) that catalyzes phase II biotransformation reactions in which lipophilic substrates are conjugated with glucuronic acid to increase the metabolite's water solubility, thereby facilitating excretion into either the urine or bile. Essential for the elimination and detoxification of drugs, xenobiotics and endogenous compounds. Involved in the glucuronidation of calcidiol, which is the major circulating form of vitamin D3 essential for the regulation of calcium and phosphate homeostasis. Also glucuronidates the biologically active form of vitamin D3, calcitriol, probably leading to its biliary transport and intestinal reabsorption. Involved in the glucuronidation of arachidonic acid (AA) and AA-derived eicosanoids including 15-HETE, 20-HETE and PGB1. This is UDP-glucuronosyltransferase 1A4 (Ugt1a4) from Oryctolagus cuniculus (Rabbit).